The chain runs to 406 residues: Phosphopentomutase (406 aa).

Residues aspartate 10, aspartate 305, histidine 310, aspartate 346, histidine 347, and histidine 358 each coordinate Mn(2+).

Belongs to the phosphopentomutase family. Mn(2+) serves as cofactor.

It localises to the cytoplasm. It catalyses the reaction 2-deoxy-alpha-D-ribose 1-phosphate = 2-deoxy-D-ribose 5-phosphate. The enzyme catalyses alpha-D-ribose 1-phosphate = D-ribose 5-phosphate. The protein operates within carbohydrate degradation; 2-deoxy-D-ribose 1-phosphate degradation; D-glyceraldehyde 3-phosphate and acetaldehyde from 2-deoxy-alpha-D-ribose 1-phosphate: step 1/2. Functionally, isomerase that catalyzes the conversion of deoxy-ribose 1-phosphate (dRib-1-P) and ribose 1-phosphate (Rib-1-P) to deoxy-ribose 5-phosphate (dRib-5-P) and ribose 5-phosphate (Rib-5-P), respectively. The protein is Phosphopentomutase of Allorhizobium ampelinum (strain ATCC BAA-846 / DSM 112012 / S4) (Agrobacterium vitis (strain S4)).